The primary structure comprises 250 residues: Cell division protein FtsQ (250 aa).

Topologically, residues 1–11 (MWNNVRQLNLA) are cytoplasmic. Residues 12–32 (ASALYALLLLVLAAAGCYWLI) form a helical membrane-spanning segment. Residues 33-250 (QRPAFALREI…FLTDTDKGKK (218 aa)) are Periplasmic-facing. The POTRA domain maps to 37 to 106 (FALREIRIDG…NALAVTLEEY (70 aa)).

The protein belongs to the FtsQ/DivIB family. FtsQ subfamily. As to quaternary structure, part of a complex composed of FtsB, FtsL and FtsQ.

Its subcellular location is the cell inner membrane. Its function is as follows. Essential cell division protein. May link together the upstream cell division proteins, which are predominantly cytoplasmic, with the downstream cell division proteins, which are predominantly periplasmic. May control correct divisome assembly. In Burkholderia pseudomallei (strain K96243), this protein is Cell division protein FtsQ.